Reading from the N-terminus, the 286-residue chain is Short-chain dehydrogenase fogD (286 aa).

Val-8, Thr-34, Asp-55, Tyr-147, Lys-151, Val-180, and Thr-182 together coordinate NADP(+). Residue Tyr-147 is the Proton acceptor of the active site. Lys-151 acts as the Lowers pKa of active site Tyr in catalysis.

Belongs to the short-chain dehydrogenases/reductases (SDR) family.

It participates in secondary metabolite biosynthesis. Short-chain dehydrogenase; part of the gene cluster that mediates the biosynthesis of flavoglaucin and congeners (including aspergin, dihydroauroglaucin and auroglaucin), prenylated salicylaldehyde derivatives carrying a saturated or an unsaturated C-7 side chain. The PKS fogA releases the carboxylic acid (8E,10E,12E)-3,5,7-trihydroxytetradeca-8,10,12-trienoic acid as its product, as well as derivatives with one and two double bonds. FogA is indeed able to reduce the initial triketide, thus being at least partially responsible for the differently saturated heptyl side chains of flavoglaucin congeners. The oxidoreductases fogB, fogC and fogD modify the nascent polyketide in fogA-bound form and, together, fogA, fogB, fogC and fogD are necessary for the formation of the aromatic core and the cyclized PKS products are released as salicyl alcohols. In particular, fogB is responsible for oxidation of a hydroxyl group or reduction of remaining double bond(s) at the C-7 residue whereas fogD is probably involved in the reductive release of the modified PKS products. The cytochrome P450 monooxygenase fogE is then responsible for the hydroxylation at C-3 of the benzene ring. The fogE products are substrates of the prenyltransferase fogH and the prenylated benzyl alcohols are subsequently oxidized by the fogF to produce the final aryl aldehydes flavoglaucin and congeners. The short-chain dehydrogenase fogG does not seem to be involved in the biosynthesis of the prenylated salicylaldehyde derivatives. The sequence is that of Short-chain dehydrogenase fogD from Aspergillus ruber (strain CBS 135680).